A 258-amino-acid chain; its full sequence is Aspartate/glutamate leucyltransferase (258 aa).

It belongs to the R-transferase family. Bpt subfamily.

It is found in the cytoplasm. The enzyme catalyses N-terminal L-glutamyl-[protein] + L-leucyl-tRNA(Leu) = N-terminal L-leucyl-L-glutamyl-[protein] + tRNA(Leu) + H(+). It carries out the reaction N-terminal L-aspartyl-[protein] + L-leucyl-tRNA(Leu) = N-terminal L-leucyl-L-aspartyl-[protein] + tRNA(Leu) + H(+). In terms of biological role, functions in the N-end rule pathway of protein degradation where it conjugates Leu from its aminoacyl-tRNA to the N-termini of proteins containing an N-terminal aspartate or glutamate. The chain is Aspartate/glutamate leucyltransferase from Rhodopseudomonas palustris (strain TIE-1).